The following is a 365-amino-acid chain: tRNA-specific 2-thiouridylase MnmA (365 aa).

ATP is bound by residues 14–21 and L40; that span reads AMSGGVDS. Catalysis depends on C108, which acts as the Nucleophile. Cysteines 108 and 204 form a disulfide. G132 lines the ATP pocket. The tract at residues 154–156 is interaction with tRNA; that stretch reads KDQ. C204 acts as the Cysteine persulfide intermediate in catalysis.

The protein belongs to the MnmA/TRMU family.

The protein resides in the cytoplasm. It carries out the reaction S-sulfanyl-L-cysteinyl-[protein] + uridine(34) in tRNA + AH2 + ATP = 2-thiouridine(34) in tRNA + L-cysteinyl-[protein] + A + AMP + diphosphate + H(+). Its function is as follows. Catalyzes the 2-thiolation of uridine at the wobble position (U34) of tRNA, leading to the formation of s(2)U34. The protein is tRNA-specific 2-thiouridylase MnmA of Rickettsia felis (strain ATCC VR-1525 / URRWXCal2) (Rickettsia azadi).